The primary structure comprises 486 residues: NADH-quinone oxidoreductase subunit N (486 aa).

A run of 14 helical transmembrane segments spans residues 8–28, 36–56, 74–94, 104–124, 125–145, 160–180, 201–221, 239–259, 269–289, 298–318, 329–349, 376–396, 410–432, and 459–479; these read LTALLPLLIIMLTVITVILSI, FVAVFSILGLIFALCSLYFLI, ILYIGMILISSICTCIFSYPW, EFYLLVIISTLGAISLTISHH, MASFFINIELISLPMFGLIAY, IILSGVSSSFLLFGIAWVYSI, ILVVLFGISMILLSLFFKLSI, VLSFFSTAGKISVFSVLLNFL, VIYFILSLIIILSILVGNLMA, FLGYTSISQIGYLLIVLLVSH, AIYLCGYLFSNIACLGIVNLI, SVLTLVLISSAGIPMTLGFIG, WLIGFAFLIGSLLGLYCYLRIIL, and IVICISGIILLALGIYPNPLI.

This sequence belongs to the complex I subunit 2 family. NDH-1 is composed of 13 different subunits. Subunits NuoA, H, J, K, L, M, N constitute the membrane sector of the complex.

It is found in the cell membrane. The catalysed reaction is a quinone + NADH + 5 H(+)(in) = a quinol + NAD(+) + 4 H(+)(out). Functionally, NDH-1 shuttles electrons from NADH, via FMN and iron-sulfur (Fe-S) centers, to quinones in the respiratory chain. The immediate electron acceptor for the enzyme in this species is believed to be ubiquinone. Couples the redox reaction to proton translocation (for every two electrons transferred, four hydrogen ions are translocated across the cytoplasmic membrane), and thus conserves the redox energy in a proton gradient. This Buchnera aphidicola subsp. Acyrthosiphon pisum (strain APS) (Acyrthosiphon pisum symbiotic bacterium) protein is NADH-quinone oxidoreductase subunit N.